Reading from the N-terminus, the 58-residue chain is Small ribosomal subunit protein bS21 (58 aa).

Residues threonine 24 to isoleucine 58 form a disordered region. Basic and acidic residues predominate over residues glutamate 31–serine 42. The segment covering valine 43–isoleucine 58 has biased composition (basic residues).

Belongs to the bacterial ribosomal protein bS21 family.

The sequence is that of Small ribosomal subunit protein bS21 from Streptococcus thermophilus (strain CNRZ 1066).